Reading from the N-terminus, the 555-residue chain is Urocanate hydratase (555 aa).

NAD(+) is bound by residues 52–53 (GG), Gln-130, 176–178 (GMG), Glu-196, Arg-201, 242–243 (NA), 263–267 (QTSAH), 273–274 (YL), and Tyr-322. Residue Cys-410 is part of the active site. Gly-492 contacts NAD(+).

Belongs to the urocanase family. NAD(+) serves as cofactor.

Its subcellular location is the cytoplasm. It catalyses the reaction 4-imidazolone-5-propanoate = trans-urocanate + H2O. The protein operates within amino-acid degradation; L-histidine degradation into L-glutamate; N-formimidoyl-L-glutamate from L-histidine: step 2/3. In terms of biological role, catalyzes the conversion of urocanate to 4-imidazolone-5-propionate. The chain is Urocanate hydratase from Shewanella putrefaciens (strain CN-32 / ATCC BAA-453).